The sequence spans 245 residues: 8-amino-3,8-dideoxy-manno-octulosonate cytidylyltransferase (245 aa).

The protein belongs to the KdsB family.

It localises to the cytoplasm. It carries out the reaction 8-amino-3,8-dideoxy-alpha-D-manno-octulosonate + CTP = CMP-8-amino-3,8-dideoxy-alpha-D-manno-oct-2-ulosonate + diphosphate. Its pathway is bacterial outer membrane biogenesis; lipopolysaccharide biosynthesis. In terms of biological role, activates KDO8N (a required 8-carbon sugar) for incorporation into bacterial lipopolysaccharide in the Shewanella genus. The sequence is that of 8-amino-3,8-dideoxy-manno-octulosonate cytidylyltransferase from Shewanella baltica (strain OS195).